The chain runs to 377 residues: tRNA(Met) cytidine acetate ligase (377 aa).

ATP is bound by residues 7-20, glycine 100, asparagine 153, and arginine 178; that span reads VTEY…HLYH.

Belongs to the TmcAL family.

It localises to the cytoplasm. The catalysed reaction is cytidine(34) in elongator tRNA(Met) + acetate + ATP = N(4)-acetylcytidine(34) in elongator tRNA(Met) + AMP + diphosphate. In terms of biological role, catalyzes the formation of N(4)-acetylcytidine (ac(4)C) at the wobble position of elongator tRNA(Met), using acetate and ATP as substrates. First activates an acetate ion to form acetyladenylate (Ac-AMP) and then transfers the acetyl group to tRNA to form ac(4)C34. This Staphylococcus saprophyticus subsp. saprophyticus (strain ATCC 15305 / DSM 20229 / NCIMB 8711 / NCTC 7292 / S-41) protein is tRNA(Met) cytidine acetate ligase.